The chain runs to 203 residues: Holliday junction branch migration complex subunit RuvA (203 aa).

The tract at residues 1-64 is domain I; it reads MIGRLRGIIL…EDAQLLYGFN (64 aa). Residues 65–142 are domain II; sequence NKQERTLFKE…KGLHGDLFTP (78 aa). Residues 143–154 are flexible linker; sequence AVDLVLTSPASP. The segment at 155–203 is domain III; sequence GSEDAEQEAVAALVALGYKPQEASRMVSKIARPDASSETLIRDALRAAL.

Belongs to the RuvA family. As to quaternary structure, homotetramer. Forms an RuvA(8)-RuvB(12)-Holliday junction (HJ) complex. HJ DNA is sandwiched between 2 RuvA tetramers; dsDNA enters through RuvA and exits via RuvB. An RuvB hexamer assembles on each DNA strand where it exits the tetramer. Each RuvB hexamer is contacted by two RuvA subunits (via domain III) on 2 adjacent RuvB subunits; this complex drives branch migration. In the full resolvosome a probable DNA-RuvA(4)-RuvB(12)-RuvC(2) complex forms which resolves the HJ.

The protein resides in the cytoplasm. Its function is as follows. The RuvA-RuvB-RuvC complex processes Holliday junction (HJ) DNA during genetic recombination and DNA repair, while the RuvA-RuvB complex plays an important role in the rescue of blocked DNA replication forks via replication fork reversal (RFR). RuvA specifically binds to HJ cruciform DNA, conferring on it an open structure. The RuvB hexamer acts as an ATP-dependent pump, pulling dsDNA into and through the RuvAB complex. HJ branch migration allows RuvC to scan DNA until it finds its consensus sequence, where it cleaves and resolves the cruciform DNA. This chain is Holliday junction branch migration complex subunit RuvA, found in Salmonella schwarzengrund (strain CVM19633).